A 303-amino-acid chain; its full sequence is Vesicle-trafficking protein SEC22c (303 aa).

At 1–183 the chain is on the cytoplasmic side; the sequence is MSMILFASIV…EPAPNLRMKP (183 aa). The Longin domain maps to 8-119; the sequence is SIVRVRDGLP…YAFLEFDSVI (112 aa). The chain crosses the membrane as a helical span at residues 184 to 204; sequence VTALGVLSLVLNIMCAALNLI. Residues 205–223 lie on the Lumenal side of the membrane; the sequence is RGVHLAEHSLQVAQEEVGN. Residues 224 to 244 form a helical membrane-spanning segment; the sequence is ILAFFIPSVACIVQCYLYLFY. Topologically, residues 245–248 are cytoplasmic; it reads SPAR. Residues 249–269 form a helical membrane-spanning segment; that stretch reads TLKVLLMLASICLGNAYLHGL. Residue Arg270 is a topological domain, lumenal. A helical transmembrane segment spans residues 271 to 291; the sequence is NTWQILFHVGVAFLSSYQILT. The Cytoplasmic portion of the chain corresponds to 292-303; sequence RQLQERQSDYGV.

Belongs to the synaptobrevin family.

It is found in the endoplasmic reticulum membrane. Functionally, may be involved in vesicle transport between the ER and the Golgi complex. The polypeptide is Vesicle-trafficking protein SEC22c (Sec22c) (Mus musculus (Mouse)).